The chain runs to 146 residues: Putative pre-16S rRNA nuclease (146 aa).

Belongs to the YqgF nuclease family.

The protein resides in the cytoplasm. Its function is as follows. Could be a nuclease involved in processing of the 5'-end of pre-16S rRNA. This chain is Putative pre-16S rRNA nuclease, found in Burkholderia pseudomallei (strain 668).